Reading from the N-terminus, the 85-residue chain is MEIIIAFFLYLNDKRKKRFLFKKSKIPLMIITNNDIVMCPIWYNYQVNTVFLPCAHVACYLCSKIIKNCHLCRRKILKTQFFKLP.

The RING-type; degenerate zinc finger occupies 39–73 (CPIWYNYQVNTVFLPCAHVACYLCSKIIKNCHLCR).

The protein is Putative RING finger protein 095L of Invertebrate iridescent virus 6 (IIV-6).